Reading from the N-terminus, the 301-residue chain is Mas-related G-protein coupled receptor member A6 (301 aa).

Residues 1–15 (MHRSISIRILITNLM) lie on the Extracellular side of the membrane. The helical transmembrane segment at 16 to 36 (IVILGLVGLTGNAIVFWLLLF) threads the bilayer. At 37-42 (RLRRNA) the chain is on the cytoplasmic side. Residues 43–63 (FSIYILNLALADFLFLLCHII) traverse the membrane as a helical segment. Residues 64-77 (ASTEHILTFSSPNS) are Extracellular-facing. A helical membrane pass occupies residues 78–98 (IFINCLYTFRVLLYIAGLNML). Topologically, residues 99 to 128 (SAISIERCLSVMCPIWYRCHRPEHTSTVMC) are cytoplasmic. Residues 129–149 (AMIWVLSLLLCILYRYFCGFL) form a helical membrane-spanning segment. Residues 150–163 (DTKYEDDYGCLAMN) are Extracellular-facing. Residues 164–184 (FLTTAYLMFLFVVLCVSSLAL) form a helical membrane-spanning segment. Residues 185 to 203 (LARLFCGAGRMKLTRLYVT) are Cytoplasmic-facing. A helical transmembrane segment spans residues 204-224 (ITLTLLVFLLCGLPCGFYWFL). Topologically, residues 225 to 240 (LSKIKNVFSVFEFSLY) are extracellular. The helical transmembrane segment at 241–261 (LTSVVLTAINSCANPIIYFFV) threads the bilayer. Residues 262-301 (GSFRHRLKHQTLKMVLQSALQDTPETPENMVEMSRNKAEL) lie on the Cytoplasmic side of the membrane.

The protein belongs to the G-protein coupled receptor 1 family. Mas subfamily. In terms of tissue distribution, expressed in a subset of sensory neurons that includes nociceptors. Expressed in the subclass of non-peptidergic sensory neurons that are IB4(+) and VR1(-).

It localises to the cell membrane. Its function is as follows. Orphan receptor. May be a receptor for RFamide-family neuropeptides such as NPFF and NPAF, which are analgesic in vivo. May regulate nociceptor function and/or development, including the sensation or modulation of pain. This is Mas-related G-protein coupled receptor member A6 (Mrgpra6) from Mus musculus (Mouse).